The chain runs to 89 residues: Small ribosomal subunit protein uS15 (89 aa).

The protein belongs to the universal ribosomal protein uS15 family. Part of the 30S ribosomal subunit. Forms a bridge to the 50S subunit in the 70S ribosome, contacting the 23S rRNA.

Functionally, one of the primary rRNA binding proteins, it binds directly to 16S rRNA where it helps nucleate assembly of the platform of the 30S subunit by binding and bridging several RNA helices of the 16S rRNA. Forms an intersubunit bridge (bridge B4) with the 23S rRNA of the 50S subunit in the ribosome. In Histophilus somni (strain 129Pt) (Haemophilus somnus), this protein is Small ribosomal subunit protein uS15.